The sequence spans 446 residues: Protein odr-4 homolog (446 aa).

Transmembrane regions (helical) follow at residues 81 to 101 and 424 to 444; these read MLPGGLLVLSVFIIATPELSK and MGVVIAVAVAVFASIFSFNYF.

The protein belongs to the ODR-4 family.

It localises to the membrane. In terms of biological role, may play a role in the trafficking of a subset of G-protein coupled receptors. The sequence is that of Protein odr-4 homolog (ODR4) from Gallus gallus (Chicken).